The following is a 1403-amino-acid chain: Centrosomal protein of 162 kDa (1403 aa).

The tract at residues 19–44 is disordered; the sequence is ELSDDSFENSNETPSQPNKDRKKKDT. Positions 26–35 are enriched in polar residues; sequence ENSNETPSQP. Residues Ser-156 and Ser-159 each carry the phosphoserine modification. 3 disordered regions span residues 171-235, 305-342, and 449-586; these read NVEP…EKTG, DTGE…TTES, and NPSL…SDDS. A compositionally biased stretch (basic and acidic residues) spans 176–189; sequence EGGRENESEHKELP. Acidic residues predominate over residues 192 to 204; the sequence is YSDDFEDAEDTDE. A compositionally biased stretch (basic and acidic residues) spans 206–220; that stretch reads LITKDEETRPKENPE. A compositionally biased stretch (polar residues) spans 449–466; the sequence is NPSLLPQDNKANQTSRSR. Ser-468 is modified (phosphoserine). Basic residues predominate over residues 481–496; that stretch reads PCKKARSAPPLPRRKP. Over residues 504–517 the composition is skewed to polar residues; it reads ARSSGYSKPSSPLQ. Basic and acidic residues-rich tracts occupy residues 522 to 532 and 567 to 581; these read LEKKTSKDNTK and PHRE…RPED. Coiled-coil stretches lie at residues 610 to 1120, 1170 to 1205, and 1234 to 1385; these read KRAQ…MLSR, EVLE…QLES, and CQNA…LHRQ.

It belongs to the CEP162 family. As to quaternary structure, interacts with alpha-tubulin. Interacts with CPNE4. Interacts with CEP290.

Its subcellular location is the cytoplasm. The protein resides in the cytoskeleton. The protein localises to the microtubule organizing center. It is found in the centrosome. It localises to the centriole. Its subcellular location is the spindle. The protein resides in the nucleus. Required to promote assembly of the transition zone in primary cilia. Acts by specifically recognizing and binding the axonemal microtubule. Localizes to the distal ends of centrioles before ciliogenesis and directly binds to axonemal microtubule, thereby promoting and restricting transition zone formation specifically at the cilia base. Required to mediate CEP290 association with microtubules. The protein is Centrosomal protein of 162 kDa (Cep162) of Rattus norvegicus (Rat).